A 313-amino-acid polypeptide reads, in one-letter code: Olfactory receptor 56A5 (313 aa).

The Extracellular portion of the chain corresponds to 1-33 (MTLPSNNSTSPVFEFFLICFPSFQSWQHWLSLP). N-linked (GlcNAc...) asparagine glycosylation is found at Asn6 and Asn7. Residues 34–54 (LSLLFLLAMGANATLLITIYL) traverse the membrane as a helical segment. The Cytoplasmic segment spans residues 55–67 (EASLHQPLYYLLS). Residues 68–88 (LLSLLDIVLCLTVIPKVLAIF) traverse the membrane as a helical segment. Over 89-100 (WFDLRSISFPAC) the chain is Extracellular. Cys100 and Cys182 form a disulfide bridge. A helical transmembrane segment spans residues 101–121 (FLQVFIMNSFLTMESCTFMIM). Residues 122-146 (AYDRYVAICKPLQYSSIITDQFVAR) are Cytoplasmic-facing. The chain crosses the membrane as a helical span at residues 147 to 167 (AAIFVVARNGLLTMPIPILSS). Residues 168–203 (RLRYCAGHIIKNCICTNVSVSKLSCDDITLNQSYQF) are Extracellular-facing. N-linked (GlcNAc...) asparagine glycans are attached at residues Asn184 and Asn198. Residues 204 to 224 (VIGWTLLGSDLILIVLSYFFI) form a helical membrane-spanning segment. Residues 225 to 246 (LKTVLRIKGEGDMAKALGTCGS) lie on the Cytoplasmic side of the membrane. The chain crosses the membrane as a helical span at residues 247 to 267 (HFILILFFTTVLLVLVITNLA). Topologically, residues 268–276 (RKRIPPDVP) are extracellular. The helical transmembrane segment at 277-297 (ILLNILHHLIPPALNPIVYGV) threads the bilayer. Topologically, residues 298–313 (RTKEIKQGIQNLLRRL) are cytoplasmic.

This sequence belongs to the G-protein coupled receptor 1 family.

The protein resides in the cell membrane. Odorant receptor. This Homo sapiens (Human) protein is Olfactory receptor 56A5 (OR56A5).